The primary structure comprises 478 residues: Proline--tRNA ligase (478 aa).

The protein belongs to the class-II aminoacyl-tRNA synthetase family. ProS type 3 subfamily. As to quaternary structure, homodimer.

It is found in the cytoplasm. It catalyses the reaction tRNA(Pro) + L-proline + ATP = L-prolyl-tRNA(Pro) + AMP + diphosphate. In terms of biological role, catalyzes the attachment of proline to tRNA(Pro) in a two-step reaction: proline is first activated by ATP to form Pro-AMP and then transferred to the acceptor end of tRNA(Pro). The protein is Proline--tRNA ligase of Ruminiclostridium cellulolyticum (strain ATCC 35319 / DSM 5812 / JCM 6584 / H10) (Clostridium cellulolyticum).